A 132-amino-acid polypeptide reads, in one-letter code: Small ribosomal subunit protein uS8 (132 aa).

The protein belongs to the universal ribosomal protein uS8 family. Part of the 30S ribosomal subunit. Contacts proteins S5 and S12.

Its function is as follows. One of the primary rRNA binding proteins, it binds directly to 16S rRNA central domain where it helps coordinate assembly of the platform of the 30S subunit. This Clostridium botulinum (strain Alaska E43 / Type E3) protein is Small ribosomal subunit protein uS8.